The following is a 435-amino-acid chain: Trigger factor (435 aa).

The region spanning 163–248 is the PPIase FKBP-type domain; that stretch reads GDTVTIDFDG…IHEIKTKELP (86 aa).

It belongs to the FKBP-type PPIase family. Tig subfamily.

It is found in the cytoplasm. The enzyme catalyses [protein]-peptidylproline (omega=180) = [protein]-peptidylproline (omega=0). Functionally, involved in protein export. Acts as a chaperone by maintaining the newly synthesized protein in an open conformation. Functions as a peptidyl-prolyl cis-trans isomerase. This chain is Trigger factor, found in Pediococcus pentosaceus (strain ATCC 25745 / CCUG 21536 / LMG 10740 / 183-1w).